Consider the following 288-residue polypeptide: Sulfur carrier protein FdhD (288 aa).

The tract at residues 1 to 23 is disordered; sequence MMRCMQSPEVHPAAAGDAEPPTH. The active-site Cysteine persulfide intermediate is Cys127.

This sequence belongs to the FdhD family.

It is found in the cytoplasm. Functionally, required for formate dehydrogenase (FDH) activity. Acts as a sulfur carrier protein that transfers sulfur from IscS to the molybdenum cofactor prior to its insertion into FDH. This is Sulfur carrier protein FdhD from Cupriavidus necator (strain ATCC 17699 / DSM 428 / KCTC 22496 / NCIMB 10442 / H16 / Stanier 337) (Ralstonia eutropha).